Reading from the N-terminus, the 270-residue chain is 4-hydroxy-tetrahydrodipicolinate reductase (270 aa).

NAD(+) is bound by residues 8-13 (GAAGRM) and Glu-34. Arg-35 is an NADP(+) binding site. NAD(+)-binding positions include 98-100 (GST) and 122-125 (SPNM). The active-site Proton donor/acceptor is His-155. (S)-2,3,4,5-tetrahydrodipicolinate is bound at residue His-156. The Proton donor role is filled by Lys-159. 165–166 (GT) provides a ligand contact to (S)-2,3,4,5-tetrahydrodipicolinate.

Belongs to the DapB family.

It is found in the cytoplasm. It carries out the reaction (S)-2,3,4,5-tetrahydrodipicolinate + NAD(+) + H2O = (2S,4S)-4-hydroxy-2,3,4,5-tetrahydrodipicolinate + NADH + H(+). The catalysed reaction is (S)-2,3,4,5-tetrahydrodipicolinate + NADP(+) + H2O = (2S,4S)-4-hydroxy-2,3,4,5-tetrahydrodipicolinate + NADPH + H(+). It functions in the pathway amino-acid biosynthesis; L-lysine biosynthesis via DAP pathway; (S)-tetrahydrodipicolinate from L-aspartate: step 4/4. Functionally, catalyzes the conversion of 4-hydroxy-tetrahydrodipicolinate (HTPA) to tetrahydrodipicolinate. The sequence is that of 4-hydroxy-tetrahydrodipicolinate reductase from Anaeromyxobacter dehalogenans (strain 2CP-1 / ATCC BAA-258).